Consider the following 358-residue polypeptide: MRSFSSFHISPMKCKPALRVHPLCDKLQMEMDRWCVDFASPESSDEEMRSFIAQKLPFLSCMLFPTALNSRIPWLIKFVCWFTLFDSLVDDVKSLGANARDASAFVGKYLETIHGAKGAMAPVGGSLLSCFASLWQHFREDMPPRQYSRLVRHVLGLFQQSASQSRLRQEGAVLTASEFVAGKRMFSSGATLVLLMEYGLGVELDEEVLEQPAIRDIATTAIDHLICVNDILSFRVEYLSGDFSNLLSSICMSQGVGLQEAADQTLELMEDCNRRFVELHDLITRSSYFSTAVEGYIDGLGYMMSGNLEWSWLTARYHGVDWVAPNLKMRQGVMYLEEPPRFEPTMPLEAYISSSDSC.

Belongs to the terpene synthase family.

Its function is as follows. No terpene synthase activity detected in vitro. This Selaginella moellendorffii (Spikemoss) protein is Microbial Terpene synthase-like protein 13.